Consider the following 433-residue polypeptide: MEKLTLTPISHVEGTVNLPGSKSLSNRALLLAALAKGTTRVTNLLDSDDVRHMLNALKQLGVNYSLSEDKSVCEVQGLGKAFAWQNGLALFLGNAGTAMRPLTAALCLANADSVPAEIILTGEPRMKERPIKHLVDALLQAGADVQYLEQEGYPPLAIRNTGLKGGKVKIDGSVSSQFLTALLMAAPMAERDTEIEIIGELVSKPYIDITLNMMKIFAVDVDNQNYQRFVVKGNQQYQSPNIFLVEGDASSASYFLAAGAIKGKVRVTGVGKNSIQGDRLFAEVLEKMGAKITWGEDYIEAERGELNGIDMDMNHIPDAAMTIATTALFAQGETVIRNIYNWRVKETDRLSAMATELRKVGAEVEEGEDFIRIQPPASDQFKHAEIETYNDHRMAMCFALVALSNTAVTICDPKCTAKTFPTFFDEFSAIATV.

The 3-phosphoshikimate site is built by Lys-22, Ser-23, and Arg-27. Lys-22 is a binding site for phosphoenolpyruvate. Positions 96 and 129 each coordinate phosphoenolpyruvate. Residues Ser-175, Ser-176, Gln-177, Ser-203, Asp-318, Asn-341, and Lys-345 each coordinate 3-phosphoshikimate. Residue Gln-177 coordinates phosphoenolpyruvate. Asp-318 acts as the Proton acceptor in catalysis. Positions 349, 393, and 418 each coordinate phosphoenolpyruvate.

This sequence belongs to the EPSP synthase family. As to quaternary structure, monomer.

The protein resides in the cytoplasm. The catalysed reaction is 3-phosphoshikimate + phosphoenolpyruvate = 5-O-(1-carboxyvinyl)-3-phosphoshikimate + phosphate. It functions in the pathway metabolic intermediate biosynthesis; chorismate biosynthesis; chorismate from D-erythrose 4-phosphate and phosphoenolpyruvate: step 6/7. Catalyzes the transfer of the enolpyruvyl moiety of phosphoenolpyruvate (PEP) to the 5-hydroxyl of shikimate-3-phosphate (S3P) to produce enolpyruvyl shikimate-3-phosphate and inorganic phosphate. The protein is 3-phosphoshikimate 1-carboxyvinyltransferase of Mannheimia succiniciproducens (strain KCTC 0769BP / MBEL55E).